The following is a 160-amino-acid chain: Deoxyuridine 5'-triphosphate nucleotidohydrolase (160 aa).

Substrate contacts are provided by residues 79–81 (RSG), Asn92, 96–98 (TVD), and Lys106.

It belongs to the dUTPase family. Requires Mg(2+) as cofactor.

The catalysed reaction is dUTP + H2O = dUMP + diphosphate + H(+). Its pathway is pyrimidine metabolism; dUMP biosynthesis; dUMP from dCTP (dUTP route): step 2/2. Functionally, this enzyme is involved in nucleotide metabolism: it produces dUMP, the immediate precursor of thymidine nucleotides and it decreases the intracellular concentration of dUTP so that uracil cannot be incorporated into DNA. The protein is Deoxyuridine 5'-triphosphate nucleotidohydrolase of Sinorhizobium medicae (strain WSM419) (Ensifer medicae).